We begin with the raw amino-acid sequence, 185 residues long: Photosystem I assembly protein Ycf4 (185 aa).

The next 2 membrane-spanning stretches (helical) occupy residues 24-44 (YIIG…SISS) and 66-86 (IIMG…WYMV).

This sequence belongs to the Ycf4 family.

Its subcellular location is the cellular thylakoid membrane. In terms of biological role, seems to be required for the assembly of the photosystem I complex. The protein is Photosystem I assembly protein Ycf4 of Prochlorococcus marinus (strain MIT 9312).